A 566-amino-acid polypeptide reads, in one-letter code: Phenylalanine--tRNA ligase beta subunit (566 aa).

One can recognise a B5 domain in the interval 287–362; the sequence is YFQEEVEFNV…IGEGLSSFNP (76 aa). Mg(2+) contacts are provided by aspartate 340, aspartate 346, glutamate 349, and aspartate 350.

The protein belongs to the phenylalanyl-tRNA synthetase beta subunit family. Type 2 subfamily. Tetramer of two alpha and two beta subunits. The cofactor is Mg(2+).

It is found in the cytoplasm. The enzyme catalyses tRNA(Phe) + L-phenylalanine + ATP = L-phenylalanyl-tRNA(Phe) + AMP + diphosphate + H(+). The sequence is that of Phenylalanine--tRNA ligase beta subunit from Borreliella burgdorferi (strain ZS7) (Borrelia burgdorferi).